A 230-amino-acid polypeptide reads, in one-letter code: Ribonuclease 3 (230 aa).

The 121-residue stretch at 5–125 (YSRFYNILGY…VIGAIYLDSD (121 aa)) folds into the RNase III domain. Mg(2+) is bound at residue glutamate 40. Aspartate 44 is a catalytic residue. 2 residues coordinate Mg(2+): aspartate 111 and glutamate 114. The active site involves glutamate 114. Residues 153 to 223 (DSKSKLQEIL…AEKMIEMLSQ (71 aa)) form the DRBM domain.

The protein belongs to the ribonuclease III family. Homodimer. Mg(2+) is required as a cofactor.

The protein localises to the cytoplasm. The enzyme catalyses Endonucleolytic cleavage to 5'-phosphomonoester.. Functionally, digests double-stranded RNA. Involved in the processing of primary rRNA transcript to yield the immediate precursors to the large and small rRNAs (23S and 16S). Also processes some mRNAs, and tRNAs when they are encoded in the rRNA operon. CRISPR (clustered regularly interspaced short palindromic repeat) is an adaptive immune system that provides protection against mobile genetic elements (viruses, transposable elements and conjugative plasmids). CRISPR clusters contain spacers, sequences complementary to antecedent mobile elements, and target invading nucleic acids. CRISPR clusters are transcribed and processed into CRISPR RNA (crRNA). In this organism endogenous ribonuclease 3 and Cas9 are required for correct coprocessing of pre-crRNA and the trans-encoded small RNA (tracrRNA). Cas9, crRNA and tracrRNA are required for cleavage of invading DNA. Complements pre-crRNA and tracrRNA coprocessing defects in an rnc deletion in S.pyogenes strain 370. The protein is Ribonuclease 3 of Francisella tularensis subsp. novicida (strain U112).